Reading from the N-terminus, the 205-residue chain is Large ribosomal subunit protein uL4 (205 aa).

The tract at residues 47–70 is disordered; sequence TRAQKSRAEVSGGGKKPFRQKGTG.

This sequence belongs to the universal ribosomal protein uL4 family. As to quaternary structure, part of the 50S ribosomal subunit.

Its function is as follows. One of the primary rRNA binding proteins, this protein initially binds near the 5'-end of the 23S rRNA. It is important during the early stages of 50S assembly. It makes multiple contacts with different domains of the 23S rRNA in the assembled 50S subunit and ribosome. Forms part of the polypeptide exit tunnel. This Acinetobacter baylyi (strain ATCC 33305 / BD413 / ADP1) protein is Large ribosomal subunit protein uL4.